Reading from the N-terminus, the 343-residue chain is E3 ubiquitin-protein ligase SP1 (343 aa).

The chain crosses the membrane as a helical span at residues 1 to 21 (MIPWGGVTCCLSAAALYLLGR). At 22 to 222 (SSGRDAEVLE…LISNLGKWSR (201 aa)) the chain is on the chloroplast intermembrane side. A helical transmembrane segment spans residues 223–244 (LYKYASMGFTVLGVFLITKHVI). The Cytoplasmic portion of the chain corresponds to 245–343 (DSVLERRRRR…IDLAVKTYRH (99 aa)). The RING-type zinc-finger motif lies at 296 to 331 (CVICLEQEYNAVFVPCGHMCCCTACSSHLTSCPLCR).

In terms of assembly, interacts with TOC33, TOC75-3 and TOC159. In terms of processing, auto-ubiquitinated.

The protein resides in the plastid. It is found in the chloroplast outer membrane. The enzyme catalyses S-ubiquitinyl-[E2 ubiquitin-conjugating enzyme]-L-cysteine + [acceptor protein]-L-lysine = [E2 ubiquitin-conjugating enzyme]-L-cysteine + N(6)-ubiquitinyl-[acceptor protein]-L-lysine.. It participates in protein modification; protein ubiquitination. E3 ubiquitin-protein ligase involved in the regulation of protein import in the chloroplast. Associates with TOC complexes and mediates ubiquitination of TOC components, promoting their degradation via the ubiquitin-proteasome system (UPS). Plays a role in the reorganization of the TOC machinery. Involved in a mechanism that regulates plastid biogenesis via UPS. Promotes stress tolerance by depleting the chloroplast protein import apparatus, which limits photosystem assembly and the potential for reactive oxygen species (ROS) formation. May act as negative regulator of programmed cell death (PCD) during biotic stress. This chain is E3 ubiquitin-protein ligase SP1, found in Arabidopsis thaliana (Mouse-ear cress).